Consider the following 88-residue polypeptide: Acyl-CoA-binding domain-containing protein 7 (88 aa).

The region spanning 3-88 (LQADFDRAAE…AKELIEKYGI (86 aa)) is the ACB domain. An acyl-CoA-binding positions include R15, 30 to 34 (YGLYK), K56, and Y75.

Belongs to the ACBD7 family.

Binds medium- and long-chain acyl-CoA esters. The protein is Acyl-CoA-binding domain-containing protein 7 (ACBD7) of Homo sapiens (Human).